The primary structure comprises 348 residues: Phenylalanine--tRNA ligase alpha subunit (348 aa).

Residue Glu-259 participates in Mg(2+) binding.

This sequence belongs to the class-II aminoacyl-tRNA synthetase family. Phe-tRNA synthetase alpha subunit type 1 subfamily. Tetramer of two alpha and two beta subunits. The cofactor is Mg(2+).

Its subcellular location is the cytoplasm. It carries out the reaction tRNA(Phe) + L-phenylalanine + ATP = L-phenylalanyl-tRNA(Phe) + AMP + diphosphate + H(+). The sequence is that of Phenylalanine--tRNA ligase alpha subunit from Lacticaseibacillus casei (strain BL23) (Lactobacillus casei).